The following is a 423-amino-acid chain: Histidine--tRNA ligase (423 aa).

It belongs to the class-II aminoacyl-tRNA synthetase family.

The protein resides in the cytoplasm. It catalyses the reaction tRNA(His) + L-histidine + ATP = L-histidyl-tRNA(His) + AMP + diphosphate + H(+). The sequence is that of Histidine--tRNA ligase from Picrophilus torridus (strain ATCC 700027 / DSM 9790 / JCM 10055 / NBRC 100828 / KAW 2/3).